We begin with the raw amino-acid sequence, 956 residues long: Pyruvate, phosphate dikinase, chloroplastic (956 aa).

The transit peptide at 1-79 (MMSSLFVEGM…AVLNPVSPPV (79 aa)) directs the protein to the chloroplast. Residue Thr536 is modified to Phosphothreonine; by PDRP1. His538 acts as the Tele-phosphohistidine intermediate in catalysis. Residues Arg644, Arg701, Glu830, Gly851, Thr852, Asn853, and Asp854 each contribute to the substrate site. Glu830 is a binding site for Mg(2+). Asp854 lines the Mg(2+) pocket. Cys916 serves as the catalytic Proton donor.

Belongs to the PEP-utilizing enzyme family. In terms of assembly, homotetramer. The cofactor is Mg(2+). Post-translationally, phosphorylation of Thr-536 in the dark inactivates the enzyme. Dephosphorylation upon light stimulation reactivates the enzyme.

Its subcellular location is the plastid. The protein localises to the chloroplast. The enzyme catalyses pyruvate + phosphate + ATP = phosphoenolpyruvate + AMP + diphosphate + H(+). With respect to regulation, activated by light-induced dephosphorylation. Inhibited by dark-induced phosphorylation. Both reactions are catalyzed by PDRP1. Its function is as follows. Formation of phosphoenolpyruvate. In Flaveria pringlei, this protein is Pyruvate, phosphate dikinase, chloroplastic (PPDK).